A 63-amino-acid chain; its full sequence is Odorranain-B1 (63 aa).

The signal sequence occupies residues 1–22; it reads MFTTKKPLLLLFFLGIISLSVC. A propeptide spanning residues 23 to 41 is cleaved from the precursor; that stretch reads EQERDADEEDGGEVTEEEV.

Belongs to the frog skin active peptide (FSAP) family. Brevinin subfamily. In terms of tissue distribution, expressed by the skin glands.

It localises to the secreted. This is Odorranain-B1 from Odorrana hainanensis (Odor frog).